A 303-amino-acid polypeptide reads, in one-letter code: Probable 5-dehydro-4-deoxyglucarate dehydratase (303 aa).

Belongs to the DapA family.

It carries out the reaction 5-dehydro-4-deoxy-D-glucarate + H(+) = 2,5-dioxopentanoate + CO2 + H2O. It functions in the pathway carbohydrate acid metabolism; D-glucarate degradation; 2,5-dioxopentanoate from D-glucarate: step 2/2. This Paracidovorax citrulli (strain AAC00-1) (Acidovorax citrulli) protein is Probable 5-dehydro-4-deoxyglucarate dehydratase.